The chain runs to 1217 residues: Myosin-5 (1217 aa).

A compositionally biased stretch (basic residues) spans methionine 1–lysine 11. The disordered stretch occupies residues methionine 1–isoleucine 24. The Myosin motor domain maps to valine 37–aspartate 716. Glycine 130–threonine 137 lines the ATP pocket. At serine 358 the chain carries Phosphoserine. An actin-binding region spans residues serine 405–serine 487. IQ domains lie at histidine 720–alanine 740 and alanine 741–serine 766. The region spanning lysine 772 to alanine 962 is the TH1 domain. 3 disordered regions span residues valine 956 to glutamate 1102, glycine 1145 to valine 1174, and asparagine 1197 to tryptophan 1217. Over residues lysine 965–serine 974 the composition is skewed to basic residues. Polar residues predominate over residues glycine 976–threonine 987. Over residues serine 994–asparagine 1007 the composition is skewed to low complexity. The span at proline 1025–glutamine 1038 shows a compositional bias: pro residues. Residues proline 1050–serine 1071 are compositionally biased toward low complexity. Residues isoleucine 1072 to serine 1081 are compositionally biased toward pro residues. The SH3 domain occupies threonine 1083–glycine 1145. A compositionally biased stretch (polar residues) spans isoleucine 1162–valine 1174. Residues serine 1203–tryptophan 1217 show a composition bias toward acidic residues.

The protein belongs to the TRAFAC class myosin-kinesin ATPase superfamily. Myosin family. Phosphorylation of the TEDS site (Ser-358) is required for the polarization of the actin cytoskeleton. Phosphorylation probably activates the myosin-I ATPase activity.

Its subcellular location is the cytoplasm. It localises to the cytoskeleton. The protein resides in the actin patch. Type-I myosin implicated in the organization of the actin cytoskeleton. Required for proper actin cytoskeleton polarization. At the cell cortex, assembles in patch-like structures together with proteins from the actin-polymerizing machinery and promotes actin assembly. Functions as actin nucleation-promoting factor (NPF) for the Arp2/3 complex. This chain is Myosin-5 (MYO5), found in Candida glabrata (strain ATCC 2001 / BCRC 20586 / JCM 3761 / NBRC 0622 / NRRL Y-65 / CBS 138) (Yeast).